The primary structure comprises 461 residues: Argininosuccinate lyase (461 aa).

Belongs to the lyase 1 family. Argininosuccinate lyase subfamily.

It is found in the cytoplasm. It carries out the reaction 2-(N(omega)-L-arginino)succinate = fumarate + L-arginine. It participates in amino-acid biosynthesis; L-arginine biosynthesis; L-arginine from L-ornithine and carbamoyl phosphate: step 3/3. In Clostridium beijerinckii (strain ATCC 51743 / NCIMB 8052) (Clostridium acetobutylicum), this protein is Argininosuccinate lyase.